The following is a 544-amino-acid chain: Neurofilament light polypeptide (544 aa).

Position 2 is an N-acetylserine (serine 2). A head region spans residues 2–87; sequence SSYSYDPYYT…KIVRTQEKVQ (86 aa). An IF rod domain is found at 84 to 394; it reads EKVQLQDLND…KLLEGEETRL (311 aa). The segment at 88–119 is coil 1A; the sequence is LQDLNDRFANFIERVHELEQRNKVLEAELLLL. The tract at residues 120–132 is linker 1; that stretch reads RQKHNEPSRLRDM. The segment at 133 to 228 is coil 1B; that stretch reads YEKEVRDVRL…KVHEEELSQL (96 aa). Residues 229-246 form a linker 12 region; it reads QSQVQYAQVSLEVEVAKP. The tract at residues 247-265 is coil 2A; sequence DLSSALRDIRGQYEKLAAK. Positions 266–274 are linker 2; that stretch reads NMQSAEEWF. The coil 2B stretch occupies residues 275–390; it reads KSRFTVLTQS…AAYRKLLEGE (116 aa). Residues 391–435 are tail, subdomain A; it reads ETRLSFSGVGAITSGYTQSAPVFGRSAYSLQSSSYMTSRAFPTYY. The tail stretch occupies residues 391–544; it reads ETRLSFSGVG…EESEKKEKKK (154 aa). Residues 436-544 form a tail, subdomain B (acidic) region; that stretch reads SSHVQEEQLD…EESEKKEKKK (109 aa). The segment at 450–544 is disordered; that stretch reads IESSRAEEAK…EESEKKEKKK (95 aa). Over residues 451–462 the composition is skewed to basic and acidic residues; it reads ESSRAEEAKAEA. The span at 463-525 shows a compositional bias: acidic residues; the sequence is PEEEEEEAAE…EAEGDGEEEG (63 aa). Over residues 526–544 the composition is skewed to basic and acidic residues; the sequence is ESKGDEAAEEESEKKEKKK.

Belongs to the intermediate filament family. In terms of assembly, forms homodimers (in vitro).

It localises to the cell projection. The protein resides in the axon. Its subcellular location is the cytoplasm. The protein localises to the cytoskeleton. In terms of biological role, neurofilaments usually contain three intermediate filament proteins: NEFL, NEFM, and NEFH which are involved in the maintenance of neuronal caliber. May additionally cooperate with other neuronal intermediate filament proteins to form neuronal filamentous networks. In Xenopus laevis (African clawed frog), this protein is Neurofilament light polypeptide (nefl).